A 93-amino-acid polypeptide reads, in one-letter code: Acylphosphatase (93 aa).

The Acylphosphatase-like domain maps to 7 to 93; that stretch reads RLTAWVHGRV…ADAIAGFTER (87 aa). Residues R22 and N40 contribute to the active site.

Belongs to the acylphosphatase family.

It catalyses the reaction an acyl phosphate + H2O = a carboxylate + phosphate + H(+). This chain is Acylphosphatase (acyP), found in Mycolicibacterium vanbaalenii (strain DSM 7251 / JCM 13017 / BCRC 16820 / KCTC 9966 / NRRL B-24157 / PYR-1) (Mycobacterium vanbaalenii).